The sequence spans 91 residues: Teretoxin Tan22.13 (91 aa).

An N-terminal signal peptide occupies residues 1–21 (MKVQILFALMMVLVTLCLGQK). A propeptide spanning residues 22–24 (MQR) is cleaved from the precursor.

The protein belongs to the teretoxin C (TC) superfamily. Contains 4 disulfide bonds. Expressed by the venom duct.

The protein resides in the secreted. The polypeptide is Teretoxin Tan22.13 (Terebra anilis (Auger snail)).